Reading from the N-terminus, the 358-residue chain is Molybdenum import ATP-binding protein ModC (358 aa).

Positions asparagine 2–glutamate 234 constitute an ABC transporter domain. Glycine 34 to threonine 41 lines the ATP pocket. The 66-residue stretch at leucine 293–aspartate 358 folds into the Mop domain.

Belongs to the ABC transporter superfamily. Molybdate importer (TC 3.A.1.8) family. The complex is composed of two ATP-binding proteins (ModC), two transmembrane proteins (ModB) and a solute-binding protein (ModA).

The protein resides in the cell inner membrane. It catalyses the reaction molybdate(out) + ATP + H2O = molybdate(in) + ADP + phosphate + H(+). Functionally, part of the ABC transporter complex ModABC involved in molybdenum import. Responsible for energy coupling to the transport system. The polypeptide is Molybdenum import ATP-binding protein ModC (Hahella chejuensis (strain KCTC 2396)).